The primary structure comprises 259 residues: Dihydroorotate dehydrogenase B (NAD(+)), electron transfer subunit (259 aa).

Positions 2-102 (MQKQNMIVVN…LGPLGHGFPV (101 aa)) constitute an FAD-binding FR-type domain. FAD is bound by residues 53-56 (RPIS), 70-72 (LYR), and 77-78 (GT). Residues Cys221, Cys226, Cys229, and Cys246 each coordinate [2Fe-2S] cluster.

The protein belongs to the PyrK family. As to quaternary structure, heterotetramer of 2 PyrK and 2 PyrD type B subunits. The cofactor is [2Fe-2S] cluster. FAD serves as cofactor.

Its pathway is pyrimidine metabolism; UMP biosynthesis via de novo pathway; orotate from (S)-dihydroorotate (NAD(+) route): step 1/1. Responsible for channeling the electrons from the oxidation of dihydroorotate from the FMN redox center in the PyrD type B subunit to the ultimate electron acceptor NAD(+). In Bacillus mycoides (strain KBAB4) (Bacillus weihenstephanensis), this protein is Dihydroorotate dehydrogenase B (NAD(+)), electron transfer subunit.